The chain runs to 174 residues: Crossover junction endodeoxyribonuclease RuvC (174 aa).

Residues D8, E68, and D140 contribute to the active site. 3 residues coordinate Mg(2+): D8, E68, and D140.

This sequence belongs to the RuvC family. Homodimer which binds Holliday junction (HJ) DNA. The HJ becomes 2-fold symmetrical on binding to RuvC with unstacked arms; it has a different conformation from HJ DNA in complex with RuvA. In the full resolvosome a probable DNA-RuvA(4)-RuvB(12)-RuvC(2) complex forms which resolves the HJ. Requires Mg(2+) as cofactor.

The protein resides in the cytoplasm. The catalysed reaction is Endonucleolytic cleavage at a junction such as a reciprocal single-stranded crossover between two homologous DNA duplexes (Holliday junction).. In terms of biological role, the RuvA-RuvB-RuvC complex processes Holliday junction (HJ) DNA during genetic recombination and DNA repair. Endonuclease that resolves HJ intermediates. Cleaves cruciform DNA by making single-stranded nicks across the HJ at symmetrical positions within the homologous arms, yielding a 5'-phosphate and a 3'-hydroxyl group; requires a central core of homology in the junction. The consensus cleavage sequence is 5'-(A/T)TT(C/G)-3'. Cleavage occurs on the 3'-side of the TT dinucleotide at the point of strand exchange. HJ branch migration catalyzed by RuvA-RuvB allows RuvC to scan DNA until it finds its consensus sequence, where it cleaves and resolves the cruciform DNA. The polypeptide is Crossover junction endodeoxyribonuclease RuvC (Legionella pneumophila subsp. pneumophila (strain Philadelphia 1 / ATCC 33152 / DSM 7513)).